The chain runs to 96 residues: Frd operon uncharacterized protein C (96 aa).

This sequence belongs to the HupF/HypC family.

The protein is Frd operon uncharacterized protein C of Proteus vulgaris.